Consider the following 614-residue polypeptide: High-affinity choline transporter 1 (614 aa).

The chain crosses the membrane as a helical span at residues 6–26; sequence GVVSIVLFYLLILVVGIWAGR. The Cytoplasmic segment spans residues 27-44; the sequence is KKQSGNDSEEEVMLAGRS. A helical membrane pass occupies residues 45–65; that stretch reads IGLFVGIFTMTATWVGGGYIN. The Extracellular portion of the chain corresponds to 66-75; that stretch reads GTAEAIYTSG. Residues 76 to 96 traverse the membrane as a helical segment; sequence LVWCQAPFGYALSLVFGGIFF. The Cytoplasmic segment spans residues 97–119; it reads ANPMRKQGYITMLDPLQDSFGER. The helical transmembrane segment at 120–140 threads the bilayer; it reads MGGLLFLPALCGEVFWAAGIL. Residues 141–158 lie on the Extracellular side of the membrane; it reads AALGATLSVIIDMDHRTS. A helical membrane pass occupies residues 159–179; it reads VILSSCIAIFYTLFGGLYSVA. Topologically, residues 180-185 are cytoplasmic; the sequence is YTDVIQ. The chain crosses the membrane as a helical span at residues 186–206; sequence LFCIFIGLWMCIPFAWSNEHV. Residues 207–225 are Extracellular-facing; it reads GSLSDLEVDWIGHVEPKKH. The chain crosses the membrane as a helical span at residues 226–246; the sequence is WLYIDYGLLLVFGGIPWQVYF. At 247–262 the chain is on the cytoplasmic side; sequence QRVLSSKTAGRAQLLS. A helical transmembrane segment spans residues 263–283; the sequence is YVAAAGCILMAIPPVLIGAIA. At 284–305 the chain is on the extracellular side; the sequence is KATPWNETDYKGPYPLTVDETS. N-linked (GlcNAc...) asparagine glycosylation occurs at Asn289. Residues 306–326 form a helical membrane-spanning segment; it reads MILPMVLQYLTPDFVSFFGLG. Over 327 to 364 the chain is Cytoplasmic; it reads AVSAAVMSSADSSVLSAASMFARNVYKLIFRQKASEME. The chain crosses the membrane as a helical span at residues 365-385; sequence IIWVMRVAIIVVGILATIMAL. At 386-394 the chain is on the extracellular side; the sequence is TIPSIYGLW. Residues 395–415 traverse the membrane as a helical segment; the sequence is SMCSDLVYVILFPQLLMVVHF. The Cytoplasmic segment spans residues 416-424; sequence KKHCNTYGS. Residues 425–445 form a helical membrane-spanning segment; that stretch reads LSAYIVALAIRLSGGEAILGL. Residues 446–467 lie on the Extracellular side of the membrane; it reads APLIKYPGYDEETKEQMFPFRT. A helical membrane pass occupies residues 468 to 488; sequence MAMLLSLVTLISVSWWTKMMF. The Cytoplasmic segment spans residues 489 to 614; that stretch reads ESGKLPPSYD…PTAEQDNTAF (126 aa). A disordered region spans residues 583 to 614; the sequence is ATGVKPSGGGGGHLQSQSGMAMPTAEQDNTAF.

The protein belongs to the sodium:solute symporter (SSF) (TC 2.A.21) family.

Its subcellular location is the membrane. Functionally, imports choline from the extracellular space to the neuron with high affinity. Rate-limiting step in acetylcholine synthesis. Sodium ion and chloride ion dependent. This is High-affinity choline transporter 1 from Drosophila melanogaster (Fruit fly).